Consider the following 2298-residue polypeptide: Protein Ycf2 (2298 aa).

Position 1637 to 1644 (1637 to 1644) interacts with ATP; that stretch reads GSIGTGRS.

The protein belongs to the Ycf2 family.

It is found in the plastid. The protein localises to the chloroplast stroma. Probable ATPase of unknown function. Its presence in a non-photosynthetic plant (Epifagus virginiana) and experiments in tobacco indicate that it has an essential function which is probably not related to photosynthesis. The polypeptide is Protein Ycf2 (Lotus japonicus (Lotus corniculatus var. japonicus)).